The following is a 203-amino-acid chain: Guanylate kinase (203 aa).

The 179-residue stretch at 5–183 (GVLYIISAPS…AVEELKSVVV (179 aa)) folds into the Guanylate kinase-like domain. 12 to 19 (APSGAGKT) contacts ATP.

The protein belongs to the guanylate kinase family.

It is found in the cytoplasm. The enzyme catalyses GMP + ATP = GDP + ADP. Essential for recycling GMP and indirectly, cGMP. This chain is Guanylate kinase, found in Geobacter metallireducens (strain ATCC 53774 / DSM 7210 / GS-15).